We begin with the raw amino-acid sequence, 2715 residues long: Chromodomain-helicase-DNA-binding protein 6 (2715 aa).

Over residues 1-11 (MKMKIQKKEKQ) the composition is skewed to basic and acidic residues. Disordered regions lie at residues 1-30 (MKMK…SVNF) and 66-244 (EEAA…QVKR). Residues 1–747 (MKMKIQKKEK…MMELRKCCNH (747 aa)) are required for DNA-dependent ATPase activity. Over residues 12 to 27 (LSNLKVLNHSPMSDAS) the composition is skewed to polar residues. Basic and acidic residues predominate over residues 123–172 (EPKEPKEPRKAKEPKKAKEHKEPKQKDGAKKARKPREASGTKEAKEKRSC). Chromo domains are found at residues 292–343 (NIIE…KDPR) and 375–439 (VEVD…KHVE). The Helicase ATP-binding domain occupies 473–647 (LFNWYNRKNC…FSLLNFLEPS (175 aa)). 486 to 493 (DEMGLGKT) contributes to the ATP binding site. The short motif at 598–601 (DEAH) is the DEAH box element. The 170-residue stretch at 787–956 (LIDKLLPKLI…LSKMEVEDLL (170 aa)) folds into the Helicase C-terminal domain. The tract at residues 1318 to 1390 (KSLSAEQGVT…SDPDKSPWPV (73 aa)) is disordered. A compositionally biased stretch (polar residues) spans 1321–1330 (SAEQGVTDGT). Composition is skewed to basic and acidic residues over residues 1333–1351 (IPER…KVDG) and 1367–1376 (FSEKKDDSRA). A Myb-like domain is found at 1449–1503 (RWTRREQADFYRTVSSFGVVYDQEKKTFDWTQFRIISRLDKKSDESLEQYFYSFV). Residues 2027 to 2038 (FENKDDYDRDGN) are compositionally biased toward basic and acidic residues. Disordered stretches follow at residues 2027 to 2063 (FENK…ITGD), 2116 to 2148 (SQQY…AAEH), 2321 to 2351 (QATL…QAEK), 2373 to 2422 (PGFG…FLPE), 2547 to 2602 (TSTA…PAIT), and 2648 to 2715 (VGLE…NDTN). Over residues 2116 to 2141 (SQQYEPSGTLPTPVLTSSAGSRTSLS) the composition is skewed to polar residues. Residues 2329-2346 (PEGPGPATSAPEPATAAS) are compositionally biased toward low complexity. Over residues 2547-2560 (TSTAPASLSSTTKS) the composition is skewed to low complexity. Composition is skewed to basic and acidic residues over residues 2567 to 2588 (KTAE…EDKP) and 2706 to 2715 (ALKDSNNDTN).

This sequence belongs to the SNF2/RAD54 helicase family. Interacts with NFE2L2; involved in activation of the transcription. In terms of assembly, (Microbial infection) Interacts with the influenza A polymerase complex composed fo PB1, PB2 and PA. As to quaternary structure, (Microbial infection) Interacts (via N-terminus) with human papillomavirus protein E8^E2C (via C-terminus); this interaction induces transcriptional repression of the viral genome. As to expression, widely expressed.

Its subcellular location is the nucleus. It is found in the nucleoplasm. The catalysed reaction is ATP + H2O = ADP + phosphate + H(+). Functionally, ATP-dependent chromatin-remodeling factor. Regulates transcription by disrupting nucleosomes in a largely non-sliding manner which strongly increases the accessibility of chromatin; nucleosome disruption requires ATP. Activates transcription of specific genes in response to oxidative stress through interaction with NFE2L2. (Microbial infection) Acts as a transcriptional repressor of different viruses including influenza virus or papillomavirus. During influenza virus infection, the viral polymerase complex localizes CHD6 to inactive chromatin where it gets degraded in a proteasome independent-manner. The protein is Chromodomain-helicase-DNA-binding protein 6 (CHD6) of Homo sapiens (Human).